The following is a 202-amino-acid chain: Outer-membrane lipoprotein carrier protein (202 aa).

Residues 1-18 form the signal peptide; it reads MNRLFLILLLIFSHEVFS.

Belongs to the LolA family. Monomer.

The protein localises to the periplasm. Its function is as follows. Participates in the translocation of lipoproteins from the inner membrane to the outer membrane. Only forms a complex with a lipoprotein if the residue after the N-terminal Cys is not an aspartate (The Asp acts as a targeting signal to indicate that the lipoprotein should stay in the inner membrane). This Legionella pneumophila (strain Lens) protein is Outer-membrane lipoprotein carrier protein.